The chain runs to 173 residues: Alpha-crystallin A chain (173 aa).

Met1 bears the N-acetylmethionine mark. The region spanning 53 to 164 is the sHSP domain; it reads NFLDSSNSGM…GDRSIPVTRD (112 aa). Zn(2+)-binding residues include His101, Glu103, and His108. A disulfide bridge connects residues Cys132 and Cys143. The tract at residues 143–173 is disordered; the sequence is CGPKSGGSESGRGDRSIPVTRDDKTNSTPSS. Positions 153-167 are enriched in basic and acidic residues; the sequence is GRGDRSIPVTRDDKT.

It belongs to the small heat shock protein (HSP20) family. As to quaternary structure, heteropolymer composed of three CRYAA and one CRYAB subunits. Inter-subunit bridging via zinc ions enhances stability, which is crucial as there is no protein turn over in the lens. Zinc coordination is achieved at least by His-101, Glu-103 and His-108. His-101 and Glu-103 come from the same molecule within the oligomer, while His-108 residue is provided by another molecule. Can also form homodimers and homotetramers (dimers of dimers) which serve as the building blocks of homooligomers. Part of a complex required for lens intermediate filament formation composed of BFSP1, BFSP2 and CRYAA.

The protein resides in the cytoplasm. It localises to the nucleus. Its function is as follows. Contributes to the transparency and refractive index of the lens. May act as a chaperone, preventing aggregation of various proteins under a wide range of stress conditions. This is Alpha-crystallin A chain (cryaa) from Psalidodon fasciatus (Banded astyanax).